Here is a 1659-residue protein sequence, read N- to C-terminus: Daxx-like protein (1659 aa).

2 disordered regions span residues 1–25 and 265–336; these read MSASVICVDLSSESDEESPAKRRRL and QLQQ…VRSL. The stretch at 438 to 469 forms a coiled coil; sequence LGQLQQEQQKILGQLQQQKQQQQQQQKKILGQ. Low complexity-rich tracts occupy residues 506–520, 528–542, and 600–625; these read SVGQLQQQQPHQSQQ, KQQPQQQKKISVGQF, and GQLQRQTQQQQKTSAGQFQQQPQQQQ. Disordered stretches follow at residues 506 to 542, 600 to 645, 658 to 713, 872 to 894, 924 to 952, 1023 to 1060, and 1536 to 1555; these read SVGQLQQQQPHQSQQKNSMVHVKQQPQQQKKISVGQF, GQLQ…TLAG, SAGQ…MPQK, TLPFRSSQRKTSEAPMTSTHVQG, LPPTTSITPQLTPTTTPPPAGPSAAVQQQ, VESPPTTPPTDKPEPERGPMTVEKSSIKPMATDKQSRA, and FKIADDGDDSEEESDSEDDD. Over residues 626–635 the composition is skewed to polar residues; the sequence is KISAGQLQEH. Low complexity-rich tracts occupy residues 636–645 and 658–698; these read SQQQQKTLAG and SAGQ…QPQQ. Composition is skewed to polar residues over residues 699–711 and 885–894; these read RTSAGLLQQQQMP and APMTSTHVQG. A necessary for interaction with His3.3A and His3.3B region spans residues 870–1659; the sequence is ARTLPFRSSQ…DQIIISDEES (790 aa). The segment covering 924–937 has biased composition (low complexity); sequence LPPTTSITPQLTPT. A compositionally biased stretch (acidic residues) spans 1541-1555; that stretch reads DGDDSEEESDSEDDD.

As to quaternary structure, interacts with p53 (via C-terminus). Interacts (via C-terminus) with His3.3A and His3.3B. Interacts with asf1. Ubiquitously expressed with higher levels in the head (at protein level). Expressed in the germ line, with prominent expression in primary spermatocytes and meiotic spermatocytes (at protein level). In ovaries, expressed in nurse cells and in the germinal vesicle of the ovarian follicle at stage 10 (at protein level).

Its subcellular location is the cytoplasm. The protein localises to the cytosol. It localises to the nucleus. It is found in the chromosome. Functionally, transcription regulator. Acts as a histone chaperone that facilitates deposition of histone H3.3. Has a role in chromatin remodeling together with asf1 and XNP. Has role in the transcriptional apoptotic response to oxidative and UV stress. In Drosophila melanogaster (Fruit fly), this protein is Daxx-like protein.